A 277-amino-acid chain; its full sequence is MAALGRPFSGLPLSGSADFLQSPPAFAGRAFPPGAAGHDLAPRPGVRGPPSSPDGRTARGRVSIHCRKKHKRLAEDDECPVRKKRLTEAELGAVADEWVLGTHQGIEGHGVNTCPGGLSVPSILDAVCEEMDQTTGEPQCEVARRRLQEIEDRIIDEDEEVESDRNVSHLPSLVLSDTMKTGLKREFDEVFTKKMIESMSRPSMELVLWKPLPELLSEKPKPSSNPKNYMGESQTKHTATGTAFPQRTEVLLEPQCTDTPLYHSLETAASTEEEMEL.

The interval 22-69 (SPPAFAGRAFPPGAAGHDLAPRPGVRGPPSSPDGRTARGRVSIHCRKK) is disordered. A compositionally biased stretch (low complexity) spans 23–55 (PPAFAGRAFPPGAAGHDLAPRPGVRGPPSSPDG). Arg-47 is subject to Omega-N-methylarginine. At Ser-52 the chain carries Phosphoserine. Over residues 58–69 (ARGRVSIHCRKK) the composition is skewed to basic residues. Residues 139-166 (QCEVARRRLQEIEDRIIDEDEEVESDRN) are a coiled coil. Disordered stretches follow at residues 216–242 (LSEKPKPSSNPKNYMGESQTKHTATGT) and 255–277 (QCTDTPLYHSLETAASTEEEMEL). Residues 225 to 242 (NPKNYMGESQTKHTATGT) are compositionally biased toward polar residues.

As to quaternary structure, interacts with CIAO2B; the interaction is direct. Interacts with MMS19; the interaction is indirect.

Its subcellular location is the cytoplasm. The protein localises to the cytoskeleton. It localises to the spindle. It is found in the nucleus. Functionally, facilitates DNA repair, cell cycle progression, and cell proliferation through its interaction with CIAO2B. This is Coiled-coil domain-containing protein 117 from Rattus norvegicus (Rat).